A 450-amino-acid chain; its full sequence is Cysteine protease ATG4C (450 aa).

Residue C112 is the Nucleophile of the active site. Active-site residues include D336 and H338.

It belongs to the peptidase C54 family.

It localises to the cytoplasm. It catalyses the reaction [protein]-C-terminal L-amino acid-glycyl-phosphatidylethanolamide + H2O = [protein]-C-terminal L-amino acid-glycine + a 1,2-diacyl-sn-glycero-3-phosphoethanolamine. Cysteine protease that plays a key role in autophagy by mediating both proteolytic activation and delipidation of ATG8 family proteins. The protease activity is required for proteolytic activation of ATG8 family proteins: cleaves the C-terminal amino acid of ATG8 proteins to reveal a C-terminal glycine. Exposure of the glycine at the C-terminus is essential for ATG8 proteins conjugation to phosphatidylethanolamine (PE) and insertion to membranes, which is necessary for autophagy. In addition to the protease activity, also mediates delipidation of ATG8 family proteins. Catalyzes delipidation of PE-conjugated forms of ATG8 proteins during macroautophagy. This Xenopus laevis (African clawed frog) protein is Cysteine protease ATG4C.